We begin with the raw amino-acid sequence, 503 residues long: Probable voltage-gated potassium channel subunit kvs-4 (503 aa).

The Cytoplasmic segment spans residues 1–231 (MNSAIMQGAA…EPASSGKAQA (231 aa)). Positions 217 to 219 (WNI) match the Required for dendritic localization motif. Residues 232-252 (FAVCSVVFVLISISGLVLGSL) form a helical membrane-spanning segment. The Extracellular portion of the chain corresponds to 253-275 (PELQVATKQRNNLTGEEFTEMEP). Residue Asn-264 is glycosylated (N-linked (GlcNAc...) asparagine). A helical membrane pass occupies residues 276–296 (MPILGYIEYVCIVWFTMEYGL). Topologically, residues 297-313 (KMLVSAERSKTFRQLLN) are cytoplasmic. The helical transmembrane segment at 314–334 (IIDLLAILPFIIEMLLLIFGI) threads the bilayer. Residues 335–346 (STEQLRDLKGAF) lie on the Extracellular side of the membrane. The helical; Voltage-sensor transmembrane segment at 347 to 366 (LVIRILRVLRVIRVLKLGRY) threads the bilayer. The Cytoplasmic portion of the chain corresponds to 367–383 (SSGLQMFGKTLKASFRQ). An S4-S5 linker region spans residues 368–383 (SGLQMFGKTLKASFRQ). The chain crosses the membrane as a helical span at residues 384 to 404 (LGMMAMVVMTGVIFFSTLVYF). Topologically, residues 405-417 (LEKDEPASKFHSI) are extracellular. The segment at residues 418–429 (PAACWWCIVTMT) is an intramembrane region (helical). An intramembrane segment occupies 430–434 (TVGYG). The Selectivity filter motif lies at 430 to 435 (TVGYGD). At 435 to 445 (DLTPVTVPGKL) the chain is on the extracellular side. The chain crosses the membrane as a helical span at residues 446–466 (VATGAIACGVLVLALPITIIV). Residues 467–503 (DNFMKVAETERPAGGNRYRTSQYPKATKSEQMILKVT) are Cytoplasmic-facing. Residues 496-500 (EQMIL) carry the Required for dendritic localization motif.

This sequence belongs to the potassium channel family. B (Shab) (TC 1.A.1.2) subfamily. Kv2.2/KCNB2 sub-subfamily. In terms of assembly, homotetramer or heterotetramer. Interacts with unc-101 (via N-terminus); which targets kvs-4 to dendrites. Expressed in the cholinergic motor neuron DA9, mechanosensory neurons ALM and PLM, and the interneuron PVPL.

The protein resides in the cell membrane. The protein localises to the perikaryon. Its subcellular location is the cell projection. It localises to the axon. It is found in the dendrite. Functionally, voltage-gated potassium channel that mediates transmembrane potassium transport in excitable membranes. The chain is Probable voltage-gated potassium channel subunit kvs-4 from Caenorhabditis elegans.